The primary structure comprises 389 residues: Cytochrome oxidase assembly protein SHY1 (389 aa).

Over Met-1 to Lys-71 the chain is Mitochondrial matrix. The chain crosses the membrane as a helical span at residues Ile-72–Val-92. Residues Arg-93–His-341 are Mitochondrial intermembrane-facing. Positions Gly-292–Thr-311 are disordered. The chain crosses the membrane as a helical span at residues Leu-342–Ala-362. At Leu-363–Met-389 the chain is on the mitochondrial matrix side.

The protein belongs to the SURF1 family. Interacts with COA1, COX14 and MSS51.

It is found in the mitochondrion inner membrane. Functionally, required for efficient assembly of cytochrome c oxidase in the mitochondrial inner membrane. Involved in a step that couples MSS51-COX14-dependent regulation of COX1 translation to early steps of cytochrome c oxidase assembly. In Saccharomyces cerevisiae (strain ATCC 204508 / S288c) (Baker's yeast), this protein is Cytochrome oxidase assembly protein SHY1 (SHY1).